The following is a 339-amino-acid chain: Anthranilate phosphoribosyltransferase (339 aa).

5-phospho-alpha-D-ribose 1-diphosphate contacts are provided by residues Gly81, 84 to 85, Ser89, 91 to 94, 109 to 117, and Ala121; these read GD, NVSS, and KHGNRALSS. Gly81 serves as a coordination point for anthranilate. Mg(2+) is bound at residue Ser93. Asn112 is a binding site for anthranilate. Arg167 provides a ligand contact to anthranilate. Mg(2+) is bound by residues Asp225 and Glu226.

It belongs to the anthranilate phosphoribosyltransferase family. Homodimer. The cofactor is Mg(2+).

It carries out the reaction N-(5-phospho-beta-D-ribosyl)anthranilate + diphosphate = 5-phospho-alpha-D-ribose 1-diphosphate + anthranilate. Its pathway is amino-acid biosynthesis; L-tryptophan biosynthesis; L-tryptophan from chorismate: step 2/5. Its function is as follows. Catalyzes the transfer of the phosphoribosyl group of 5-phosphorylribose-1-pyrophosphate (PRPP) to anthranilate to yield N-(5'-phosphoribosyl)-anthranilate (PRA). The chain is Anthranilate phosphoribosyltransferase from Brucella canis (strain ATCC 23365 / NCTC 10854 / RM-666).